Here is a 113-residue protein sequence, read N- to C-terminus: UPF0060 membrane protein Arth_4423 (113 aa).

4 helical membrane passes run 7-27 (VLLF…VWQA), 33-53 (AWWW…VATL), 62-82 (ILAA…MVFD), and 91-111 (VIGS…PRGT).

This sequence belongs to the UPF0060 family.

The protein resides in the cell membrane. The chain is UPF0060 membrane protein Arth_4423 from Arthrobacter sp. (strain FB24).